Consider the following 308-residue polypeptide: Polyketide transferase claH (308 aa).

The abhydrolase domain stretch occupies residues 50–280 (SDIAVYFSQQ…RVEVAAGKSH (231 aa)).

The protein belongs to the polyketide transferase af380 family.

It participates in secondary metabolite biosynthesis. Its function is as follows. Polyketide transferase; part of the cla gene cluster that produces clavatol and ortho-quinone methide. The clavatol biosynthesis cluster cla and the terrestric acid cluster tra are both involved in the production of peniphenones and penilactones. The non-reducing PKS claF is responsible for the formation of clavatol from successive condensations of 3 malonyl-CoA units, presumably with a simple acetyl-CoA starter unit, and 2 methylation steps. The esterase claE probably collaborates with claF by catalyzing the hydrolysis of ACP-bound acyl intermediates to free the ACP from stalled intermediates. The clavatol oxidase claD then converts clavatol to hydroxyclavatol. Spontaneous dehydration of hydroxyclavatol leads to the accumulation of the highly active ortho-quinone methide. On the other hand, the PKS-NRPS hybrid traA is involved in the formation of crustosic acid, with the help of traB and traD. The polyketide synthase module (PKS) of traA is responsible for the synthesis of the polyketide backbone via the condensation of an acetyl-CoA starter unit with 3 malonyl-CoA units. The downstream nonribosomal peptide synthetase (NRPS) module then amidates the carboxyl end of the polyketide with L-malic acid. Because traA lacks a designated enoylreductase (ER) domain, the required activity is provided the enoyl reductase traG. Crustosic acid undergoes decarboxylation and isomerization to the terrestric acid, catalyzed by the 2-oxoglutarate-dependent dioxygenase traH. Both acids are further converted to the 2 gamma-butyrolactones (R)-5-methyltetronic acid and (S)-5-carboxylmethyltetronic acid, with involvement of the cytochrome P450 monooxygenase claJ. Spontaneous addition of the methide to these gamma-butyrolactones leads to peniphenone D and penilactone D, which undergo again stereospecific attacking by methide to give penilactones A and B. The function of the polyketide transferase claH has not been investigated yet. The sequence is that of Polyketide transferase claH from Penicillium crustosum (Blue mold fungus).